A 211-amino-acid polypeptide reads, in one-letter code: ATP phosphoribosyltransferase (211 aa).

This sequence belongs to the ATP phosphoribosyltransferase family. Short subfamily. As to quaternary structure, heteromultimer composed of HisG and HisZ subunits.

It localises to the cytoplasm. It catalyses the reaction 1-(5-phospho-beta-D-ribosyl)-ATP + diphosphate = 5-phospho-alpha-D-ribose 1-diphosphate + ATP. It participates in amino-acid biosynthesis; L-histidine biosynthesis; L-histidine from 5-phospho-alpha-D-ribose 1-diphosphate: step 1/9. Its function is as follows. Catalyzes the condensation of ATP and 5-phosphoribose 1-diphosphate to form N'-(5'-phosphoribosyl)-ATP (PR-ATP). Has a crucial role in the pathway because the rate of histidine biosynthesis seems to be controlled primarily by regulation of HisG enzymatic activity. The protein is ATP phosphoribosyltransferase of Bacillus mycoides (strain KBAB4) (Bacillus weihenstephanensis).